The following is a 999-amino-acid chain: Testis anion transporter 1 (999 aa).

The Cytoplasmic segment spans residues M1–D93. Residues L94–L114 form a helical membrane-spanning segment. Residues T115 to Q117 lie on the Extracellular side of the membrane. A helical membrane pass occupies residues L118 to F138. Position 139 (G139) is a topological domain, cytoplasmic. The chain crosses the membrane as a helical span at residues S140 to L160. Topologically, residues K161–T200 are extracellular. N190 carries an N-linked (GlcNAc...) asparagine glycan. A helical membrane pass occupies residues F201–Y221. Topologically, residues L222–Y230 are cytoplasmic. The helical transmembrane segment at L231–V251 threads the bilayer. Residues S252–C268 lie on the Extracellular side of the membrane. A helical transmembrane segment spans residues I269–L289. The Cytoplasmic segment spans residues R290–E305. A helical transmembrane segment spans residues F306–A326. The Extracellular portion of the chain corresponds to T327–R354. Residues V355–K375 form a helical membrane-spanning segment. Residues K376–D390 lie on the Cytoplasmic side of the membrane. The helical transmembrane segment at L391 to G411 threads the bilayer. The Extracellular portion of the chain corresponds to S412–Q427. Residues F428–F448 form a helical membrane-spanning segment. At H449–N453 the chain is on the cytoplasmic side. A helical transmembrane segment spans residues A454–L474. Residues P475–S494 lie on the Extracellular side of the membrane. A helical membrane pass occupies residues A495–I515. Over T516 to E544 the chain is Cytoplasmic. Residues D541 to A796 enclose the STAS domain. Residues V545 to V565 traverse the membrane as a helical segment. Residues Y566 to P999 lie on the Extracellular side of the membrane. The interval T661–P999 is interaction with RACGAP1. Disordered regions lie at residues E678–L701 and S893–P999. Residues N684 to E696 are compositionally biased toward pro residues. Composition is skewed to acidic residues over residues S893–S903 and E912–P947. Positions G973–P982 are enriched in polar residues.

The protein belongs to the SLC26A/SulP transporter (TC 2.A.53) family. Interacts with RACGAP1. Interacts with CFTR; stimulates anion transport activity of CFTR. N-glycosylated. Expressed in testis and epididymis. Located at the end of the midpiece of the flagella, known as the annulus, in spermatozoa.

The protein resides in the membrane. The catalysed reaction is sulfate(out) + chloride(in) = sulfate(in) + chloride(out). It catalyses the reaction oxalate(in) + chloride(out) = oxalate(out) + chloride(in). Its function is as follows. Antiporter that mediates the exchange of sulfate and oxalate against chloride ions across a membrane. Stimulates anion transport activity of CFTR. May cooperate with CFTR in the regulation of chloride and bicarbonate ions fluxes required for activation of the ADCY10/PKA pathway during sperm motility and sperm capacitation. May play a role in sperm tail differentiation and motility and hence male fertility. This chain is Testis anion transporter 1, found in Mus musculus (Mouse).